The following is a 364-amino-acid chain: Valine dehydrogenase (364 aa).

Lysine 91 is an active-site residue. 191–197 (GVGKVGH) provides a ligand contact to NAD(+).

It belongs to the Glu/Leu/Phe/Val dehydrogenases family. In terms of assembly, homodimer.

The protein localises to the cytoplasm. It catalyses the reaction L-valine + NAD(+) + H2O = 3-methyl-2-oxobutanoate + NH4(+) + NADH + H(+). The protein operates within amino-acid degradation; L-valine degradation. Inhibited by pyridoxal 5'-phosphate (PLP). Functionally, oxidative deamination of branched-chain amino acids. Oxidizes L-valine and L-alpha-aminobutyric acid efficiently, and L-alanine and L-isoleucine less efficiently. D-valine and L-glutamate were not substrates for the enzyme. The catabolism of valine is the major source of fatty acid precursors for macrolide biosynthesis and a vital source of antibiotic precursors. This chain is Valine dehydrogenase, found in Streptomyces albus (strain ATCC 21838 / DSM 41398 / FERM P-419 / JCM 4703 / NBRC 107858).